The sequence spans 705 residues: Beta-xylosidase (705 aa).

This sequence belongs to the glycosyl hydrolase 52 family.

The enzyme catalyses Hydrolysis of (1-&gt;4)-beta-D-xylans, to remove successive D-xylose residues from the non-reducing termini.. It participates in glycan degradation; xylan degradation. In Geobacillus stearothermophilus (Bacillus stearothermophilus), this protein is Beta-xylosidase (xylA).